The primary structure comprises 270 residues: Formamidopyrimidine-DNA glycosylase (270 aa).

Catalysis depends on P2, which acts as the Schiff-base intermediate with DNA. E3 serves as the catalytic Proton donor. K56 (proton donor; for beta-elimination activity) is an active-site residue. Positions 89, 107, and 151 each coordinate DNA. An FPG-type zinc finger spans residues 236 to 270 (TVYGRAGEPCRVCATPIRLLRQGQRSTYYCPNCQK). The Proton donor; for delta-elimination activity role is filled by R260.

This sequence belongs to the FPG family. As to quaternary structure, monomer. It depends on Zn(2+) as a cofactor.

It catalyses the reaction Hydrolysis of DNA containing ring-opened 7-methylguanine residues, releasing 2,6-diamino-4-hydroxy-5-(N-methyl)formamidopyrimidine.. It carries out the reaction 2'-deoxyribonucleotide-(2'-deoxyribose 5'-phosphate)-2'-deoxyribonucleotide-DNA = a 3'-end 2'-deoxyribonucleotide-(2,3-dehydro-2,3-deoxyribose 5'-phosphate)-DNA + a 5'-end 5'-phospho-2'-deoxyribonucleoside-DNA + H(+). Functionally, involved in base excision repair of DNA damaged by oxidation or by mutagenic agents. Acts as a DNA glycosylase that recognizes and removes damaged bases. Has a preference for oxidized purines, such as 7,8-dihydro-8-oxoguanine (8-oxoG). Has AP (apurinic/apyrimidinic) lyase activity and introduces nicks in the DNA strand. Cleaves the DNA backbone by beta-delta elimination to generate a single-strand break at the site of the removed base with both 3'- and 5'-phosphates. The chain is Formamidopyrimidine-DNA glycosylase from Variovorax paradoxus (strain S110).